Here is a 501-residue protein sequence, read N- to C-terminus: Pre-mRNA-splicing factor 38B (501 aa).

Positions 1-11 (MAGSQQQQQQQ) are enriched in low complexity. Disordered stretches follow at residues 1–28 (MAGS…LPLW) and 208–501 (DQHM…ADSP). The span at 243–273 (GDKRRSRTPRRSPSPRKSQNRSRSRSHHRER) shows a compositional bias: basic residues. Residues 281–302 (ELERERDRQRKEREGKDRDRDR) adopt a coiled-coil conformation. Residues 281-328 (ELERERDRQRKEREGKDRDRDRDRDRERDRERDRDRRRSRTPDRNAER) are compositionally biased toward basic and acidic residues. Residues 329-341 (RRSRSRERRRSRS) show a composition bias toward basic residues. Residues 342 to 408 (TSRDKRTERK…EEKKHREEKR (67 aa)) are compositionally biased toward basic and acidic residues. Basic residues predominate over residues 409 to 435 (SKRSRSRSRDRKHKAERSSKKRSRSGS). Residues 437–447 (SRQEAGEEKNR) are compositionally biased toward basic and acidic residues. Residues 448 to 468 (KRERSHSKDRQHKRSRSKERS) show a composition bias toward basic residues. The span at 469 to 491 (HRRESSNERIHARQERPSSESGE) shows a compositional bias: basic and acidic residues. The span at 492–501 (RTNSVRADSP) shows a compositional bias: polar residues.

It belongs to the PRP38 family.

Its subcellular location is the nucleus. May be required for pre-mRNA splicing. The polypeptide is Pre-mRNA-splicing factor 38B (prpf38b) (Danio rerio (Zebrafish)).